We begin with the raw amino-acid sequence, 115 residues long: Ribosome-binding factor A (115 aa).

This sequence belongs to the RbfA family. In terms of assembly, monomer. Binds 30S ribosomal subunits, but not 50S ribosomal subunits or 70S ribosomes.

The protein localises to the cytoplasm. In terms of biological role, one of several proteins that assist in the late maturation steps of the functional core of the 30S ribosomal subunit. Associates with free 30S ribosomal subunits (but not with 30S subunits that are part of 70S ribosomes or polysomes). Required for efficient processing of 16S rRNA. May interact with the 5'-terminal helix region of 16S rRNA. This chain is Ribosome-binding factor A, found in Streptococcus gordonii (strain Challis / ATCC 35105 / BCRC 15272 / CH1 / DL1 / V288).